A 499-amino-acid chain; its full sequence is Probable malate:quinone oxidoreductase (499 aa).

The protein belongs to the MQO family. It depends on FAD as a cofactor.

It catalyses the reaction (S)-malate + a quinone = a quinol + oxaloacetate. It participates in carbohydrate metabolism; tricarboxylic acid cycle; oxaloacetate from (S)-malate (quinone route): step 1/1. This Exiguobacterium sp. (strain ATCC BAA-1283 / AT1b) protein is Probable malate:quinone oxidoreductase.